A 406-amino-acid chain; its full sequence is Digeranylgeranylglycerophospholipid reductase 2 (406 aa).

The FAD site is built by G15, E34, C45, A46, G48, R99, A123, D279, G291, and I292.

This sequence belongs to the geranylgeranyl reductase family. DGGGPL reductase subfamily. The cofactor is FAD.

The catalysed reaction is a 2,3-bis-O-phytanyl-sn-glycerol 1-phospholipid + 8 oxidized 2[4Fe-4S]-[ferredoxin] = a 2,3-bis-O-(geranylgeranyl)-sn-glycerol 1-phospholipid + 8 reduced 2[4Fe-4S]-[ferredoxin] + 16 H(+). It catalyses the reaction 2,3-bis-O-(phytanyl)-sn-glycerol 1-phosphate + 8 oxidized 2[4Fe-4S]-[ferredoxin] = 2,3-bis-O-(geranylgeranyl)-sn-glycerol 1-phosphate + 8 reduced 2[4Fe-4S]-[ferredoxin] + 16 H(+). The enzyme catalyses a 2,3-bis-O-phytanyl-sn-glycerol 1-phospholipid + 8 A = a 2,3-bis-O-(geranylgeranyl)-sn-glycerol 1-phospholipid + 8 AH2. It carries out the reaction CDP-2,3-bis-O-(geranylgeranyl)-sn-glycerol + 8 AH2 = CDP-2,3-bis-O-(phytanyl)-sn-glycerol + 8 A. The catalysed reaction is archaetidylserine + 8 AH2 = 2,3-bis-O-phytanyl-sn-glycero-3-phospho-L-serine + 8 A. It participates in membrane lipid metabolism; glycerophospholipid metabolism. In terms of biological role, is involved in the reduction of 2,3-digeranylgeranylglycerophospholipids (unsaturated archaeols) into 2,3-diphytanylglycerophospholipids (saturated archaeols) in the biosynthesis of archaeal membrane lipids. Catalyzes the formation of archaetidic acid (2,3-di-O-phytanyl-sn-glyceryl phosphate) from 2,3-di-O-geranylgeranylglyceryl phosphate (DGGGP) via the hydrogenation of each double bond of the isoprenoid chains. Is also probably able to reduce double bonds of geranyl groups in CDP-2,3-bis-O-(geranylgeranyl)-sn-glycerol and archaetidylserine, thus acting at various stages in the biosynthesis of archaeal membrane lipids. In Methanococcoides burtonii (strain DSM 6242 / NBRC 107633 / OCM 468 / ACE-M), this protein is Digeranylgeranylglycerophospholipid reductase 2.